We begin with the raw amino-acid sequence, 258 residues long: Bidirectional sugar transporter SWEET9 (258 aa).

Topologically, residues 1 to 7 are extracellular; sequence MFLKVHE. Residues 8–28 traverse the membrane as a helical segment; sequence IAFLFGLLGNIVSFGVFLSPV. A MtN3/slv 1 domain is found at 10–96; the sequence is FLFGLLGNIV…FLYILYAPRE (87 aa). The Cytoplasmic portion of the chain corresponds to 29-42; it reads PTFYGIYKKKSSKG. A helical membrane pass occupies residues 43–63; the sequence is FQSIPYICALASATLLLYYGI. The Extracellular segment spans residues 64 to 69; the sequence is MKTHAY. The helical transmembrane segment at 70–90 threads the bilayer; sequence LIISINTFGCFIEISYLFLYI. The Cytoplasmic segment spans residues 91–103; the sequence is LYAPREAKISTLK. The helical transmembrane segment at 104 to 124 threads the bilayer; sequence LIVICNIGGLGLLILLVNLLV. At 125–131 the chain is on the extracellular side; that stretch reads PKQHRVS. Residues 132-152 form a helical membrane-spanning segment; sequence TVGWVCAAYSLAVFASPLSVM. A MtN3/slv 2 domain is found at 132–216; it reads TVGWVCAAYS…ILYMMYQGST (85 aa). At 153 to 165 the chain is on the cytoplasmic side; sequence RKVIKTKSVEYMP. The helical transmembrane segment at 166 to 186 threads the bilayer; it reads FLLSLSLTLNAVMWFFYGLLI. Over 187–189 the chain is Extracellular; that stretch reads KDK. A helical membrane pass occupies residues 190 to 210; that stretch reads FIAMPNILGFLFGVAQMILYM. The Cytoplasmic segment spans residues 211 to 258; sequence MYQGSTKTDLPTENQLANKTDVNEVPIVAVELPDVGSDNVEGSVRPMK.

Belongs to the SWEET sugar transporter family. Forms heterooligomers with SWEET1, SWEET5, SWEET8, SWEET11, SWEET13, SWEET16 and SWEET17. As to expression, specifically expressed in nectaries, mostly in the lower half of nectary parenchyma.

The protein resides in the cell membrane. The protein localises to the cytoplasmic vesicle membrane. It localises to the golgi apparatus. Its subcellular location is the trans-Golgi network membrane. Its function is as follows. Mediates both low-affinity uptake and efflux of sugar across the plasma membrane. Nectary-specific sugar transporter required for nectar production by mediating the secretion of sucrose from the nectary parenchyma to the extracellular space. This chain is Bidirectional sugar transporter SWEET9, found in Arabidopsis thaliana (Mouse-ear cress).